The primary structure comprises 631 residues: Probable G-protein coupled receptor 153 (631 aa).

Topologically, residues 1 to 11 (MSDERRLPSSA) are extracellular. Residues 12–32 (VGWLACGGLSLLANAWGILSV) traverse the membrane as a helical segment. Residues 33–41 (GAKQKKWKP) lie on the Cytoplasmic side of the membrane. A helical transmembrane segment spans residues 42-62 (LEFLLCTLAATHMLNVAVPIA). The Extracellular segment spans residues 63-84 (TYAVVQLRRQRPDYEWNEGLCK). Residues 85-105 (VFVSTFYTLTLATCFSVTSIS) traverse the membrane as a helical segment. The Cytoplasmic segment spans residues 106–126 (YHRMWMVRWPVNYRLSNAKKQ). The chain crosses the membrane as a helical span at residues 127 to 147 (AVHTVMGIWMVSFILSALPAV). Residues 148 to 162 (GWHDTSERFYTHGCR) are Extracellular-facing. The helical transmembrane segment at 163–183 (FIVAEIGLGFGVCFLLLVGGS) threads the bilayer. Over 184–243 (VAMGMVCTAIALFQTLATQVGHRADRRTFTVPTIVVEDAQGKRRSSIDGSEPARTSLQIT) the chain is Cytoplasmic. A helical membrane pass occupies residues 244–264 (GLVATIVVIYDCLMGFPVLVV). The Extracellular portion of the chain corresponds to 265-276 (SFSSLRADASAP). Residues 277-297 (WMALCVLWCSVTQALLLPLFL) traverse the membrane as a helical segment. The Cytoplasmic segment spans residues 298–631 (WTCDRYRADL…LHSDSLGSAS (334 aa)). 3 disordered regions span residues 486-518 (LQPS…RSAS), 546-590 (QPFP…SLSA), and 603-631 (CGSI…GSAS). Over residues 605-617 (SISSFLSSPSESS) the composition is skewed to low complexity.

Belongs to the G-protein coupled receptor 1 family.

Its subcellular location is the cell membrane. In terms of biological role, orphan receptor. This is Probable G-protein coupled receptor 153 (Gpr153) from Mus musculus (Mouse).